Here is a 507-residue protein sequence, read N- to C-terminus: Cytochrome P450 4X1 (507 aa).

The chain crosses the membrane as a helical span at residues 14–34 (LHLALVFCLALVLMQAVKLYL). Cysteine 452 contributes to the heme binding site.

Belongs to the cytochrome P450 family. Requires heme as cofactor. In terms of tissue distribution, expressed at high levels in brain, mainly in neurons in different regions, including brain stem, hippocampus, cortex and cerebellum. Also expressed in cerebral vasculature. Not detected in kidney, nor liver.

The protein localises to the endoplasmic reticulum membrane. It localises to the microsome membrane. The enzyme catalyses N-(5Z,8Z,11Z,14Z-eicosatetraenoyl)-ethanolamine + reduced [NADPH--hemoprotein reductase] + O2 = N-(14,15-epoxy-5Z,8Z,11Z-eicosatrienoyl)-ethanolamine + oxidized [NADPH--hemoprotein reductase] + H2O + H(+). A cytochrome P450 monooxygenase that selectively catalyzes the epoxidation of the last double bond of the arachidonoyl moiety of anandamide, potentially modulating endocannabinoid signaling. Has no hydroxylase activity toward various fatty acids, steroids and prostaglandins. Mechanistically, uses molecular oxygen inserting one oxygen atom into a substrate, and reducing the second into a water molecule, with two electrons provided by NADPH via cytochrome P450 reductase (CPR; NADPH-ferrihemoprotein reductase). The sequence is that of Cytochrome P450 4X1 from Rattus norvegicus (Rat).